A 680-amino-acid polypeptide reads, in one-letter code: DNA-directed RNA polymerase subunit beta' (680 aa).

C69, C71, C87, and C90 together coordinate Zn(2+). Mg(2+)-binding residues include D489, D491, and D493.

This sequence belongs to the RNA polymerase beta' chain family. RpoC1 subfamily. In terms of assembly, in plastids the minimal PEP RNA polymerase catalytic core is composed of four subunits: alpha, beta, beta', and beta''. When a (nuclear-encoded) sigma factor is associated with the core the holoenzyme is formed, which can initiate transcription. Mg(2+) is required as a cofactor. Requires Zn(2+) as cofactor.

Its subcellular location is the plastid. It is found in the chloroplast. The enzyme catalyses RNA(n) + a ribonucleoside 5'-triphosphate = RNA(n+1) + diphosphate. DNA-dependent RNA polymerase catalyzes the transcription of DNA into RNA using the four ribonucleoside triphosphates as substrates. The polypeptide is DNA-directed RNA polymerase subunit beta' (Lobularia maritima (Sweet alyssum)).